The following is a 408-amino-acid chain: Arginine biosynthesis bifunctional protein ArgJ (408 aa).

Substrate is bound by residues threonine 158, lysine 184, threonine 195, glutamate 281, asparagine 403, and threonine 408. Threonine 195 acts as the Nucleophile in catalysis.

Belongs to the ArgJ family. As to quaternary structure, heterotetramer of two alpha and two beta chains.

It localises to the cytoplasm. The enzyme catalyses N(2)-acetyl-L-ornithine + L-glutamate = N-acetyl-L-glutamate + L-ornithine. The catalysed reaction is L-glutamate + acetyl-CoA = N-acetyl-L-glutamate + CoA + H(+). It functions in the pathway amino-acid biosynthesis; L-arginine biosynthesis; L-ornithine and N-acetyl-L-glutamate from L-glutamate and N(2)-acetyl-L-ornithine (cyclic): step 1/1. Its pathway is amino-acid biosynthesis; L-arginine biosynthesis; N(2)-acetyl-L-ornithine from L-glutamate: step 1/4. In terms of biological role, catalyzes two activities which are involved in the cyclic version of arginine biosynthesis: the synthesis of N-acetylglutamate from glutamate and acetyl-CoA as the acetyl donor, and of ornithine by transacetylation between N(2)-acetylornithine and glutamate. This Bacillus thuringiensis subsp. konkukian (strain 97-27) protein is Arginine biosynthesis bifunctional protein ArgJ.